Here is a 114-residue protein sequence, read N- to C-terminus: MICOS complex subunit MIC12 (114 aa).

Residues 4 to 26 (IAKLGSFTLVSGVVATSCYYYFI) form a helical membrane-spanning segment.

The protein belongs to the MICOS complex subunit Mic12 family. Component of the mitochondrial contact site and cristae organizing system (MICOS) complex.

The protein localises to the mitochondrion inner membrane. Component of the MICOS complex, a large protein complex of the mitochondrial inner membrane that plays crucial roles in the maintenance of crista junctions, inner membrane architecture, and formation of contact sites to the outer membrane. This Candida glabrata (strain ATCC 2001 / BCRC 20586 / JCM 3761 / NBRC 0622 / NRRL Y-65 / CBS 138) (Yeast) protein is MICOS complex subunit MIC12 (AIM5).